The chain runs to 324 residues: Phospho-N-acetylmuramoyl-pentapeptide-transferase (324 aa).

10 helical membrane passes run 5-25 (GLLV…PLFI), 52-72 (PTMG…IMAI), 77-97 (LGAE…IGFL), 117-137 (LLGQ…QGFD), 147-167 (ITFD…IGGS), 176-196 (LDGL…IIAV), 202-222 (AVAI…VFNA), 227-247 (VFMG…VAIL), 253-273 (LLVI…IQVI), and 302-322 (VVVT…YIGV).

It belongs to the glycosyltransferase 4 family. MraY subfamily. Requires Mg(2+) as cofactor.

The protein localises to the cell membrane. The catalysed reaction is UDP-N-acetyl-alpha-D-muramoyl-L-alanyl-gamma-D-glutamyl-meso-2,6-diaminopimeloyl-D-alanyl-D-alanine + di-trans,octa-cis-undecaprenyl phosphate = di-trans,octa-cis-undecaprenyl diphospho-N-acetyl-alpha-D-muramoyl-L-alanyl-D-glutamyl-meso-2,6-diaminopimeloyl-D-alanyl-D-alanine + UMP. The protein operates within cell wall biogenesis; peptidoglycan biosynthesis. Catalyzes the initial step of the lipid cycle reactions in the biosynthesis of the cell wall peptidoglycan: transfers peptidoglycan precursor phospho-MurNAc-pentapeptide from UDP-MurNAc-pentapeptide onto the lipid carrier undecaprenyl phosphate, yielding undecaprenyl-pyrophosphoryl-MurNAc-pentapeptide, known as lipid I. This Bacillus cytotoxicus (strain DSM 22905 / CIP 110041 / 391-98 / NVH 391-98) protein is Phospho-N-acetylmuramoyl-pentapeptide-transferase.